The chain runs to 560 residues: MFS-type transporter pgmG (560 aa).

The tract at residues 1 to 32 (MSETVTQTETDQRPATARSLGAEEKEAKSDEQ) is disordered. The segment covering 21–31 (GAEEKEAKSDE) has biased composition (basic and acidic residues). The next 8 membrane-spanning stretches (helical) occupy residues 45-65 (FIVIISILSSVTLYSLDNTIV), 84-104 (WLSVAFLVACVATNSIWSKIY), 111-131 (WLYLFCVVLFEVGSAMCGAAP), 141-161 (ALAGLGGAGLYVGVMTLLSVN), 174-194 (TGLTWGVGTVLGPIVGGGFAV), 201-221 (WSFYINLFFAAVAIPIYLFML), 242-262 (LGTILMIGACVSGVMAINFGG), and 275-295 (CFVVSGVLFIVFGLQQWYCIG). The N-linked (GlcNAc...) asparagine glycan is linked to asparagine 300. Residues 313-333 (FIILFVQTASVATVFFVPIYF) traverse the membrane as a helical segment. Residue asparagine 343 is glycosylated (N-linked (GlcNAc...) asparagine). 5 consecutive transmembrane segments (helical) span residues 346 to 366 (AIDAGVRLLPLVCFIVAAMIL), 378 to 398 (MPWYLVGGCLSLVGSVLMYTI), 409 to 429 (GYMIILGVGGGMYAQASFAVA), 440 to 460 (VATGFISLAQLTGGTIALAIA), and 515 to 535 (ISQVYILPITGAAMSISLAIF).

This sequence belongs to the major facilitator superfamily. TCR/Tet family.

It is found in the membrane. In terms of biological role, MFS-type transporter; part of the gene cluster that mediates the biosynthesis of pleosporalin A, ascomycone A, as well as a third cryptic naphthoquinone derived pigment, all responsible for the coloration of conidia. Seems not to be involved in pigment biosynthesis although its expression is regulated by the cluster-specific transcription factor pgmR. The sequence is that of MFS-type transporter pgmG from Aspergillus terreus.